The chain runs to 625 residues: TORTIFOLIA1-like protein 4 (625 aa).

The segment at 1–34 is disordered; the sequence is MSVHGRFPASPPISLSPSSSSTSPSSQSPSTPPD. Low complexity predominate over residues 12–29; that stretch reads PISLSPSSSSTSPSSQSP. HEAT repeat units lie at residues 69–106, 110–147, 149–186, 190–227, and 230–268; these read DSFS…YHGD, PHLA…HVTR, PFAS…AATD, EQLR…AGGA, and KPVL…AEDL. The segment at 391–466 is disordered; sequence SVDNKGPHFT…VKNCKDDVEE (76 aa). Composition is skewed to basic and acidic residues over residues 404–413, 420–434, and 455–466; these read KSSEETEEKA, IIKH…EDSK, and DSVKNCKDDVEE. At Ser475 the chain carries Phosphoserine. The segment at 582 to 625 is disordered; the sequence is GMRESTDTNNGQRGGSVFQKRSRRDQFQDCMHTTLQKPTTRLST. Polar residues predominate over residues 612-625; that stretch reads MHTTLQKPTTRLST.

The protein is TORTIFOLIA1-like protein 4 of Arabidopsis thaliana (Mouse-ear cress).